A 278-amino-acid chain; its full sequence is Prohibitin-7, mitochondrial (278 aa).

Over 1–14 the chain is Mitochondrial matrix; the sequence is MNVKKVPNVPGSPA. Residues 15 to 37 form a helical; Signal-anchor for type II membrane protein membrane-spanning segment; that stretch reads LSALLKLGVIGGLGLYCIGSSMY. Residues 38-278 are Mitochondrial intermembrane-facing; that stretch reads NVDGGHRAIV…NSSDLLISKQ (241 aa). The stretch at 186–220 forms a coiled coil; that stretch reads KEFTEAIEKKQVAAQEAERAKFIVEKAEQDKKSAI.

Belongs to the prohibitin family. As to quaternary structure, component of a prohibitin multimeric complex in mitochondrial membranes.

It localises to the mitochondrion inner membrane. Prohibitin probably acts as a holdase/unfoldase for the stabilization of newly synthesized mitochondrial proteins. The polypeptide is Prohibitin-7, mitochondrial (PHB7) (Arabidopsis thaliana (Mouse-ear cress)).